Reading from the N-terminus, the 136-residue chain is Ig kappa chain V-V region MOPC 21 (136 aa).

An N-terminal signal peptide occupies residues 1–29; that stretch reads MHQTSMGIKMESHTLVFISILLCLYGADG. The segment at 30-52 is framework-1; it reads NIVMTQSPKSMSMSVGERVTLTC. The tract at residues 53–63 is complementarity-determining-1; the sequence is KASENVVTYVS. Residues 64–78 form a framework-2 region; that stretch reads WYQQKPEQSPKLLIY. The segment at 79 to 85 is complementarity-determining-2; it reads GASNRYT. The framework-3 stretch occupies residues 86 to 117; the sequence is GVPDRFTGSGSATDFTLTISSVQAEDLADYHC. Positions 118–126 are complementarity-determining-3; sequence GQGYSYPYT. Positions 127 to 136 are framework-4; the sequence is FGGGTKLEIK.

This chain is Ig kappa chain V-V region MOPC 21, found in Mus musculus (Mouse).